A 146-amino-acid polypeptide reads, in one-letter code: Probable flagellum biosynthesis repressor protein FlbT 1 (146 aa).

The protein belongs to the FlbT family.

Has a post-transcriptional repressor function in flagellum biogenesis. Associates with the 5'-UTR of fljK mRNA and promotes its degradation. This chain is Probable flagellum biosynthesis repressor protein FlbT 1, found in Bradyrhizobium diazoefficiens (strain JCM 10833 / BCRC 13528 / IAM 13628 / NBRC 14792 / USDA 110).